The sequence spans 828 residues: Periplasmic nitrate reductase 1 (828 aa).

The segment at residues 1 to 30 (MKMTRRAFVKANAAASAAAVAGITLPASAA) is a signal peptide (tat-type signal). In terms of domain architecture, 4Fe-4S Mo/W bis-MGD-type spans 41 to 97 (IKWDKAPCRFCGTGCSVLVGTQNGRVVATQGDPEAPVNKGLNCIKGYFLSKIMYGKD). The [4Fe-4S] cluster site is built by Cys-48, Cys-51, Cys-55, and Cys-83. Mo-bis(molybdopterin guanine dinucleotide) contacts are provided by residues Lys-85, Gln-152, Asn-177, Cys-181, 214-221 (WGSNMAEM), 245-249 (STYYH), 264-266 (QTD), Met-374, Gln-378, Asn-484, 510-511 (SD), Lys-533, Asp-560, and 718-727 (TGRVLEHWHT). Substrate is bound at residue Phe-794. The Mo-bis(molybdopterin guanine dinucleotide) site is built by Asn-802 and Lys-819.

This sequence belongs to the prokaryotic molybdopterin-containing oxidoreductase family. NasA/NapA/NarB subfamily. Component of the periplasmic nitrate reductase NapAB complex composed of NapA and NapB. The cofactor is [4Fe-4S] cluster. It depends on Mo-bis(molybdopterin guanine dinucleotide) as a cofactor. Post-translationally, predicted to be exported by the Tat system. The position of the signal peptide cleavage has not been experimentally proven.

It localises to the periplasm. The catalysed reaction is 2 Fe(II)-[cytochrome] + nitrate + 2 H(+) = 2 Fe(III)-[cytochrome] + nitrite + H2O. In terms of biological role, catalytic subunit of the periplasmic nitrate reductase complex NapAB. Receives electrons from NapB and catalyzes the reduction of nitrate to nitrite. The protein is Periplasmic nitrate reductase 1 of Photobacterium profundum (strain SS9).